Here is a 296-residue protein sequence, read N- to C-terminus: Bifunctional protein FolD (296 aa).

NADP(+) contacts are provided by residues 166 to 168 (GRS), serine 191, and isoleucine 232.

The protein belongs to the tetrahydrofolate dehydrogenase/cyclohydrolase family. Homodimer.

It carries out the reaction (6R)-5,10-methylene-5,6,7,8-tetrahydrofolate + NADP(+) = (6R)-5,10-methenyltetrahydrofolate + NADPH. The enzyme catalyses (6R)-5,10-methenyltetrahydrofolate + H2O = (6R)-10-formyltetrahydrofolate + H(+). Its pathway is one-carbon metabolism; tetrahydrofolate interconversion. Functionally, catalyzes the oxidation of 5,10-methylenetetrahydrofolate to 5,10-methenyltetrahydrofolate and then the hydrolysis of 5,10-methenyltetrahydrofolate to 10-formyltetrahydrofolate. The chain is Bifunctional protein FolD from Cereibacter sphaeroides (strain ATCC 17023 / DSM 158 / JCM 6121 / CCUG 31486 / LMG 2827 / NBRC 12203 / NCIMB 8253 / ATH 2.4.1.) (Rhodobacter sphaeroides).